The primary structure comprises 327 residues: Glycoprotein integral membrane protein 1 (327 aa).

Positions 1 to 23 (MEGGLSAPLSVRLLLFIALPAAG) are cleaved as a signal peptide. At 24-259 (WLTTNAPRPP…LCRFWSSVVP (236 aa)) the chain is on the extracellular side. N-linked (GlcNAc...) asparagine glycosylation is found at N44, N62, and N146. The chain crosses the membrane as a helical span at residues 260–280 (VLFMFLDVMVVGVLGAAGVIA). Over 281 to 327 (VLKLLFPVCENKGILQVDKMNGISVPIILYPDGSEKTAQKLTDKTDI) the chain is Cytoplasmic.

The protein localises to the membrane. This Mus musculus (Mouse) protein is Glycoprotein integral membrane protein 1 (Ginm1).